We begin with the raw amino-acid sequence, 193 residues long: DNA damage-inducible transcript 4-like protein (193 aa).

It belongs to the DDIT4 family. In terms of tissue distribution, up-regulated in atherosclerotic plaques relative to healthy segments of the same artery.

The protein localises to the cytoplasm. Functionally, inhibits cell growth by regulating the TOR signaling pathway upstream of the TSC1-TSC2 complex and downstream of AKT1. The polypeptide is DNA damage-inducible transcript 4-like protein (DDIT4L) (Homo sapiens (Human)).